The primary structure comprises 122 residues: Large ribosomal subunit protein uL14c (122 aa).

The protein belongs to the universal ribosomal protein uL14 family. As to quaternary structure, part of the 50S ribosomal subunit.

Its subcellular location is the plastid. The protein resides in the chloroplast. Binds to 23S rRNA. The protein is Large ribosomal subunit protein uL14c of Glycine max (Soybean).